We begin with the raw amino-acid sequence, 218 residues long: NAD(P)H-quinone oxidoreductase subunit I (218 aa).

4Fe-4S ferredoxin-type domains follow at residues 55 to 84 (GRIHYEFDKCIACEVCVRVCPINLPVVDWV) and 95 to 124 (RNYSIDFGVCIFCGNCVEYCPTNCLSMTEE). Cys64, Cys67, Cys70, Cys74, Cys104, Cys107, Cys110, and Cys114 together coordinate [4Fe-4S] cluster. A disordered region spans residues 168–218 (EVQPHGVDPSRPRAGQRPDQVLSSLKQNAGGSAGNEGESATSTNTSKGSAE). Residues 208 to 218 (TSTNTSKGSAE) are compositionally biased toward polar residues.

The protein belongs to the complex I 23 kDa subunit family. In terms of assembly, NDH-1 is composed of at least 11 different subunits. The cofactor is [4Fe-4S] cluster.

It is found in the cellular thylakoid membrane. The enzyme catalyses a plastoquinone + NADH + (n+1) H(+)(in) = a plastoquinol + NAD(+) + n H(+)(out). It carries out the reaction a plastoquinone + NADPH + (n+1) H(+)(in) = a plastoquinol + NADP(+) + n H(+)(out). In terms of biological role, NDH-1 shuttles electrons from an unknown electron donor, via FMN and iron-sulfur (Fe-S) centers, to quinones in the respiratory and/or the photosynthetic chain. The immediate electron acceptor for the enzyme in this species is believed to be plastoquinone. Couples the redox reaction to proton translocation, and thus conserves the redox energy in a proton gradient. The chain is NAD(P)H-quinone oxidoreductase subunit I from Synechococcus sp. (strain WH7803).